The chain runs to 508 residues: Photosystem II CP47 reaction center protein (508 aa).

Helical transmembrane passes span 21–36, 101–115, 140–156, 203–218, 237–252, and 457–472; these read AVHI…WAGS, IILS…IWHW, GIHL…FGAF, IAAG…FHLS, VLSS…AFIV, and CFAL…HGAR.

The protein belongs to the PsbB/PsbC family. PsbB subfamily. In terms of assembly, PSII is composed of 1 copy each of membrane proteins PsbA, PsbB, PsbC, PsbD, PsbE, PsbF, PsbH, PsbI, PsbJ, PsbK, PsbL, PsbM, PsbT, PsbX, PsbY, PsbZ, Psb30/Ycf12, at least 3 peripheral proteins of the oxygen-evolving complex and a large number of cofactors. It forms dimeric complexes. Binds multiple chlorophylls. PSII binds additional chlorophylls, carotenoids and specific lipids. serves as cofactor.

The protein localises to the plastid. The protein resides in the chloroplast thylakoid membrane. Its function is as follows. One of the components of the core complex of photosystem II (PSII). It binds chlorophyll and helps catalyze the primary light-induced photochemical processes of PSII. PSII is a light-driven water:plastoquinone oxidoreductase, using light energy to abstract electrons from H(2)O, generating O(2) and a proton gradient subsequently used for ATP formation. The polypeptide is Photosystem II CP47 reaction center protein (Chara vulgaris (Common stonewort)).